The following is a 1555-amino-acid chain: UDP-glucose:glycoprotein glucosyltransferase 1 (1555 aa).

An N-terminal signal peptide occupies residues 1-42; it reads MGCKGDASGACAAGALPVTGVCYKMGVLVVLTVLWLFSSVKA. N-linked (GlcNAc...) asparagine glycans are attached at residues asparagine 536 and asparagine 1228. The tract at residues 1244–1555 is glucosyltransferase; sequence KTEEVKQDKD…REGPQKREEL (312 aa). Serine 1277 is modified (phosphoserine). The disordered stretch occupies residues 1534–1555; that stretch reads GALYKEKTKEPSREGPQKREEL. Positions 1552–1555 match the Prevents secretion from ER motif; it reads REEL.

Belongs to the glycosyltransferase 8 family. Monomer as well as in a tight complex with SELENOF. Interacts with METTL23. Part of a large chaperone multiprotein complex comprising DNAJB11, HSP90B1, HSPA5, HYOU, PDIA2, PDIA4, PDIA6, PPIB, SDF2L1, UGGT1 and very small amounts of ERP29, but not, or at very low levels, CALR nor CANX. The cofactor is Ca(2+). Mn(2+) serves as cofactor. Higher levels in pancreas, skeletal muscle, kidney, and brain. Low levels in lung and heart.

The protein resides in the endoplasmic reticulum lumen. It localises to the endoplasmic reticulum-Golgi intermediate compartment. The catalysed reaction is N(4)-(alpha-D-Man-(1-&gt;2)-alpha-D-Man-(1-&gt;2)-alpha-D-Man-(1-&gt;3)-[alpha-D-Man-(1-&gt;2)-alpha-D-Man-(1-&gt;3)-[alpha-D-Man-(1-&gt;2)-alpha-D-Man-(1-&gt;6)]-alpha-D-Man-(1-&gt;6)]-beta-D-Man-(1-&gt;4)-beta-D-GlcNAc-(1-&gt;4)-beta-D-GlcNAc)-L-asparaginyl-[protein] (N-glucan mannose isomer 9A1,2,3B1,2,3) + UDP-alpha-D-glucose = N(4)-(alpha-D-Glc-(1-&gt;3)-alpha-D-Man-(1-&gt;2)-alpha-D-Man-(1-&gt;2)-alpha-D-Man-(1-&gt;3)-[alpha-D-Man-(1-&gt;2)-alpha-D-Man-(1-&gt;3)-[alpha-D-Man-(1-&gt;2)-alpha-D-Man-(1-&gt;6)]-alpha-D-Man-(1-&gt;6)]-beta-D-Man-(1-&gt;4)-beta-D-GlcNAc-(1-&gt;4)-beta-D-GlcNAc)-L-asparaginyl-[protein] + UDP + H(+). It participates in protein modification; protein glycosylation. With respect to regulation, catalytic activity is enhanced by complex formation with SELENOF. Its function is as follows. Recognizes glycoproteins with minor folding defects. Reglucosylates single N-glycans near the misfolded part of the protein, thus providing quality control for protein folding in the endoplasmic reticulum. Reglucosylated proteins are recognized by calreticulin for recycling to the endoplasmic reticulum and refolding or degradation. The polypeptide is UDP-glucose:glycoprotein glucosyltransferase 1 (UGGT1) (Homo sapiens (Human)).